The primary structure comprises 532 residues: Beta-hexosaminidase subunit A1 (532 aa).

A signal peptide spans 1–18; it reads MIKKIILFFAVLIAIVIG. N-linked (GlcNAc...) asparagine glycosylation is found at asparagine 72 and asparagine 79. Glutamate 308 functions as the Proton donor in the catalytic mechanism. Asparagine 350 and asparagine 427 each carry an N-linked (GlcNAc...) asparagine glycan.

Belongs to the glycosyl hydrolase 20 family. As to quaternary structure, dimer. Post-translationally, the N-terminus is blocked. N-glycosylated.

Its subcellular location is the lysosome. The enzyme catalyses Hydrolysis of terminal non-reducing N-acetyl-D-hexosamine residues in N-acetyl-beta-D-hexosaminides.. Its function is as follows. Responsible for the degradation of GM2 gangliosides, and a variety of other molecules containing terminal N-acetyl hexosamines. This enzyme plays a role during the slug stage of development in the maintenance of pseudoplasmodia of normal size. The sequence is that of Beta-hexosaminidase subunit A1 (hexa1) from Dictyostelium discoideum (Social amoeba).